The chain runs to 65 residues: Large ribosomal subunit protein bL35 (65 aa).

The segment covering 1-45 (MPKMKSHSGAKKRFKKTGNGKIKRKKANKGHLLTKKNAKRKRQLR) has biased composition (basic residues). A disordered region spans residues 1-65 (MPKMKSHSGA…RDRIKRMLST (65 aa)). Over residues 48 to 57 (VVVDDKANRD) the composition is skewed to basic and acidic residues.

The protein belongs to the bacterial ribosomal protein bL35 family.

This Salinibacter ruber (strain DSM 13855 / M31) protein is Large ribosomal subunit protein bL35.